A 153-amino-acid polypeptide reads, in one-letter code: MEKINSLSTQLVKCCFCDFLKVKMHTVSYIHFFYLGLCLLTLTSSAAAGPETLCGAELVDALQFVCGDRGFYFSKPTGYGSSSRRLHHKGIVDECCFQSCDLRRLEMYCAPIKPPKSARSVRAQRHTDMPKAQKEVHLKNTSRGNTGNRNYRM.

Residues 49 to 77 (GPETLCGAELVDALQFVCGDRGFYFSKPT) form a b region. 3 cysteine pairs are disulfide-bonded: cysteine 54–cysteine 96, cysteine 66–cysteine 109, and cysteine 95–cysteine 100. The segment at 78 to 89 (GYGSSSRRLHHK) is c. The tract at residues 90-110 (GIVDECCFQSCDLRRLEMYCA) is a. The interval 111-118 (PIKPPKSA) is d. Residues 119 to 153 (RSVRAQRHTDMPKAQKEVHLKNTSRGNTGNRNYRM) constitute a propeptide, e peptide. Positions 119–153 (RSVRAQRHTDMPKAQKEVHLKNTSRGNTGNRNYRM) are disordered. Over residues 125 to 138 (RHTDMPKAQKEVHL) the composition is skewed to basic and acidic residues. Residues 139-153 (KNTSRGNTGNRNYRM) are compositionally biased toward polar residues.

The protein belongs to the insulin family. Forms a ternary complex with IGFR1 and ITGAV:ITGB3. Forms a ternary complex with IGFR1 and ITGA6:ITGB4. Forms a ternary complex with IGFBP3 and ALS.

Its subcellular location is the secreted. The insulin-like growth factors, isolated from plasma, are structurally and functionally related to insulin but have a much higher growth-promoting activity. Acts as a ligand for IGF1R. Binds to the alpha subunit of IGF1R, leading to the activation of the intrinsic tyrosine kinase activity which autophosphorylates tyrosine residues in the beta subunit thus initiatiating a cascade of down-stream signaling events leading to activation of the PI3K-AKT/PKB and the Ras-MAPK pathways. Binds to integrins. Its binding to integrins and subsequent ternary complex formation with integrins and IGFR1 are essential for IGF1 signaling. This is Insulin-like growth factor 1 from Gallus gallus (Chicken).